The sequence spans 371 residues: MDPDRQADIAALAATLTTVERVLDVDGLRDRIQKLEQEASDPNLWDDQSRAQKVTSELSHAQNELRRVEELRQRVEDLPVLYEMAAEEEGQDAENAGAEADAELAKLRVDIEAMEVRTLLSGEYDEREAVVTIRSGAGGVDAADWAEMLMRMYIRWAEQHDYPVEVFDTSYAEEAGIKSATFAVHAPYAYGTLSVEQGTHRLVRISPFDNQSRRQTSFADVEVLPVVETTDHIDVPETDLRVDVYRSSGPGGQSVNTTDSAVRLTHIPTGIVVTCQNEKSQLQNKVAAMRVLQAKLLARKKQEERAALDALKGDGGSSWGNQMRSYVLHPYQMVKDLRTEYEVGNPSAVLDGDIDGFLEAGIRWRNRRDDD.

Glutamine 253 bears the N5-methylglutamine mark.

This sequence belongs to the prokaryotic/mitochondrial release factor family. Post-translationally, methylated by PrmC. Methylation increases the termination efficiency of RF2.

Its subcellular location is the cytoplasm. Functionally, peptide chain release factor 2 directs the termination of translation in response to the peptide chain termination codons UGA and UAA. The protein is Peptide chain release factor 2 of Mycobacterium sp. (strain JLS).